A 496-amino-acid polypeptide reads, in one-letter code: Isocitrate dehydrogenase [NADP] (496 aa).

2 residues coordinate NADP(+): Leu-88 and Thr-90. D-threo-isocitrate-binding residues include Ser-98, Asn-100, Arg-104, Arg-114, and Arg-137. NADP(+)-binding residues include Asn-193, Gln-229, and Lys-232. Residue Asp-248 participates in Mg(2+) binding. Residues Glu-277, Gly-281, Ser-282, Ala-283, Lys-285, Tyr-286, and Asn-293 each coordinate NADP(+).

It belongs to the isocitrate and isopropylmalate dehydrogenases family. Homodimer. Requires Mg(2+) as cofactor. Mn(2+) serves as cofactor.

It carries out the reaction D-threo-isocitrate + NADP(+) = 2-oxoglutarate + CO2 + NADPH. Its function is as follows. Catalyzes the oxidative decarboxylation of isocitrate to 2-oxoglutarate and carbon dioxide with the concomitant reduction of NADP(+). The protein is Isocitrate dehydrogenase [NADP] (icd) of Thermus thermophilus (strain ATCC 27634 / DSM 579 / HB8).